A 315-amino-acid chain; its full sequence is DNA-directed RNA polymerase subunit alpha (315 aa).

Positions 1–227 (MTQFQIECVE…NLFNPFKKIN (227 aa)) are alpha N-terminal domain (alpha-NTD). The segment at 239–315 (EDKISQIPIE…PKRKTNKKEN (77 aa)) is alpha C-terminal domain (alpha-CTD).

This sequence belongs to the RNA polymerase alpha chain family. In plastids the minimal PEP RNA polymerase catalytic core is composed of four subunits: alpha, beta, beta', and beta''. When a (nuclear-encoded) sigma factor is associated with the core the holoenzyme is formed, which can initiate transcription.

The protein resides in the plastid. Its subcellular location is the cyanelle. The catalysed reaction is RNA(n) + a ribonucleoside 5'-triphosphate = RNA(n+1) + diphosphate. DNA-dependent RNA polymerase catalyzes the transcription of DNA into RNA using the four ribonucleoside triphosphates as substrates. The polypeptide is DNA-directed RNA polymerase subunit alpha (Cyanophora paradoxa).